The chain runs to 391 residues: Xylose isomerase (391 aa).

Catalysis depends on residues His54 and Asp57. The Mg(2+) site is built by Glu181, Glu217, His220, Asp245, Asp255, Asp257, and Asp287.

It belongs to the xylose isomerase family. As to quaternary structure, homotetramer. The cofactor is Mg(2+).

Its subcellular location is the cytoplasm. The catalysed reaction is alpha-D-xylose = alpha-D-xylulofuranose. Involved in D-xylose catabolism. The chain is Xylose isomerase (xylA) from Streptomyces albus G.